Here is a 419-residue protein sequence, read N- to C-terminus: Serine hydroxymethyltransferase (419 aa).

Residues leucine 122 and 126 to 128 each bind (6S)-5,6,7,8-tetrahydrofolate; that span reads GHL. Lysine 231 is modified (N6-(pyridoxal phosphate)lysine). 354 to 356 serves as a coordination point for (6S)-5,6,7,8-tetrahydrofolate; the sequence is SPF.

It belongs to the SHMT family. As to quaternary structure, homodimer. The cofactor is pyridoxal 5'-phosphate.

It localises to the cytoplasm. The catalysed reaction is (6R)-5,10-methylene-5,6,7,8-tetrahydrofolate + glycine + H2O = (6S)-5,6,7,8-tetrahydrofolate + L-serine. It functions in the pathway one-carbon metabolism; tetrahydrofolate interconversion. It participates in amino-acid biosynthesis; glycine biosynthesis; glycine from L-serine: step 1/1. Its function is as follows. Catalyzes the reversible interconversion of serine and glycine with tetrahydrofolate (THF) serving as the one-carbon carrier. This reaction serves as the major source of one-carbon groups required for the biosynthesis of purines, thymidylate, methionine, and other important biomolecules. Also exhibits THF-independent aldolase activity toward beta-hydroxyamino acids, producing glycine and aldehydes, via a retro-aldol mechanism. This chain is Serine hydroxymethyltransferase, found in Exiguobacterium sibiricum (strain DSM 17290 / CCUG 55495 / CIP 109462 / JCM 13490 / 255-15).